We begin with the raw amino-acid sequence, 179 residues long: ATP synthase subunit delta (179 aa).

Belongs to the ATPase delta chain family. F-type ATPases have 2 components, F(1) - the catalytic core - and F(0) - the membrane proton channel. F(1) has five subunits: alpha(3), beta(3), gamma(1), delta(1), epsilon(1). F(0) has three main subunits: a(1), b(2) and c(10-14). The alpha and beta chains form an alternating ring which encloses part of the gamma chain. F(1) is attached to F(0) by a central stalk formed by the gamma and epsilon chains, while a peripheral stalk is formed by the delta and b chains.

The protein resides in the cell membrane. Functionally, f(1)F(0) ATP synthase produces ATP from ADP in the presence of a proton or sodium gradient. F-type ATPases consist of two structural domains, F(1) containing the extramembraneous catalytic core and F(0) containing the membrane proton channel, linked together by a central stalk and a peripheral stalk. During catalysis, ATP synthesis in the catalytic domain of F(1) is coupled via a rotary mechanism of the central stalk subunits to proton translocation. This protein is part of the stalk that links CF(0) to CF(1). It either transmits conformational changes from CF(0) to CF(1) or is implicated in proton conduction. The polypeptide is ATP synthase subunit delta (Staphylococcus aureus (strain Mu50 / ATCC 700699)).